Consider the following 256-residue polypeptide: Probable serine/threonine-protein kinase YbdM (256 aa).

In terms of domain architecture, Protein kinase spans 25 to 256 (YKIEECLGMG…DLNRAIQSVT (232 aa)). ATP contacts are provided by residues 31–39 (LGMGGYGLV) and Lys-54. Catalysis depends on Asp-149, which acts as the Proton acceptor.

This sequence belongs to the protein kinase superfamily. Ser/Thr protein kinase family.

It catalyses the reaction L-seryl-[protein] + ATP = O-phospho-L-seryl-[protein] + ADP + H(+). It carries out the reaction L-threonyl-[protein] + ATP = O-phospho-L-threonyl-[protein] + ADP + H(+). The sequence is that of Probable serine/threonine-protein kinase YbdM (ybdM) from Bacillus subtilis (strain 168).